The following is a 301-amino-acid chain: Ribosomal RNA small subunit methyltransferase A (301 aa).

S-adenosyl-L-methionine is bound by residues N23, I25, G50, E72, D97, and N149.

The protein belongs to the class I-like SAM-binding methyltransferase superfamily. rRNA adenine N(6)-methyltransferase family. RsmA subfamily.

The protein resides in the cytoplasm. The enzyme catalyses adenosine(1518)/adenosine(1519) in 16S rRNA + 4 S-adenosyl-L-methionine = N(6)-dimethyladenosine(1518)/N(6)-dimethyladenosine(1519) in 16S rRNA + 4 S-adenosyl-L-homocysteine + 4 H(+). Specifically dimethylates two adjacent adenosines (A1518 and A1519) in the loop of a conserved hairpin near the 3'-end of 16S rRNA in the 30S particle. May play a critical role in biogenesis of 30S subunits. The polypeptide is Ribosomal RNA small subunit methyltransferase A (Rickettsia peacockii (strain Rustic)).